The sequence spans 390 residues: Probable tRNA sulfurtransferase (390 aa).

In terms of domain architecture, THUMP spans 60-162 (KQIIDDLKEV…YDCAIVYGHK (103 aa)). ATP contacts are provided by residues 180–181 (LL), 205–206 (TF), R264, G286, and Q295.

Belongs to the ThiI family.

It localises to the cytoplasm. It catalyses the reaction [ThiI sulfur-carrier protein]-S-sulfanyl-L-cysteine + a uridine in tRNA + 2 reduced [2Fe-2S]-[ferredoxin] + ATP + H(+) = [ThiI sulfur-carrier protein]-L-cysteine + a 4-thiouridine in tRNA + 2 oxidized [2Fe-2S]-[ferredoxin] + AMP + diphosphate. The enzyme catalyses [ThiS sulfur-carrier protein]-C-terminal Gly-Gly-AMP + S-sulfanyl-L-cysteinyl-[cysteine desulfurase] + AH2 = [ThiS sulfur-carrier protein]-C-terminal-Gly-aminoethanethioate + L-cysteinyl-[cysteine desulfurase] + A + AMP + 2 H(+). The protein operates within cofactor biosynthesis; thiamine diphosphate biosynthesis. Functionally, catalyzes the ATP-dependent transfer of a sulfur to tRNA to produce 4-thiouridine in position 8 of tRNAs, which functions as a near-UV photosensor. Also catalyzes the transfer of sulfur to the sulfur carrier protein ThiS, forming ThiS-thiocarboxylate. This is a step in the synthesis of thiazole, in the thiamine biosynthesis pathway. The sulfur is donated as persulfide by IscS. In Ureaplasma parvum serovar 3 (strain ATCC 27815 / 27 / NCTC 11736), this protein is Probable tRNA sulfurtransferase.